Consider the following 155-residue polypeptide: Sec-independent protein translocase protein TatB (155 aa).

A helical membrane pass occupies residues 1-21; it reads MFGMGFFEILVVLVVAIIFLG. Positions 109-155 are disordered; sequence SLENNAPPKHLNKEVSNREVFHNEPPKEIELIANNNTTKHDKEKEHV. Basic and acidic residues-rich tracts occupy residues 119–138 and 146–155; these read LNKE…KEIE and TKHDKEKEHV.

The protein belongs to the TatB family. The Tat system comprises two distinct complexes: a TatABC complex, containing multiple copies of TatA, TatB and TatC subunits, and a separate TatA complex, containing only TatA subunits. Substrates initially bind to the TatABC complex, which probably triggers association of the separate TatA complex to form the active translocon.

It is found in the cell inner membrane. Functionally, part of the twin-arginine translocation (Tat) system that transports large folded proteins containing a characteristic twin-arginine motif in their signal peptide across membranes. Together with TatC, TatB is part of a receptor directly interacting with Tat signal peptides. TatB may form an oligomeric binding site that transiently accommodates folded Tat precursor proteins before their translocation. The chain is Sec-independent protein translocase protein TatB from Helicobacter acinonychis (strain Sheeba).